Here is a 577-residue protein sequence, read N- to C-terminus: NKAP family protein UM04995 (577 aa).

A disordered region spans residues 1–479 (MPTLAERLGS…YGGALLPGEG (479 aa)). Positions 20 to 31 (KSSHDREQELRS) are enriched in basic and acidic residues. Residues 36–49 (SKQTSRNTAHQDLA) are compositionally biased toward polar residues. Positions 50-60 (SSERRSIDREL) are enriched in basic and acidic residues. Positions 70–89 (SPLSSPQNGSSPRRQRGSPS) are enriched in low complexity. Composition is skewed to basic and acidic residues over residues 127-163 (PREDVQSDRSPRSYPRRRDDQRWQANERRANQDDSRR), 170-193 (SGDRRRYFDSNDDRNPRQEDREAP), and 265-297 (DSSSRHRDKDKDKDRDKDKGKRDRKHSSSDKHH). Composition is skewed to basic residues over residues 298 to 316 (SSSRSHRHHSSTSRRRRSS) and 325 to 336 (SRHRHTRSSRSH). Acidic residues predominate over residues 340–350 (DDDDDDDEDVD). The segment covering 363–385 (KVSDGSDSGRSESETDSDSDARS) has biased composition (basic and acidic residues). Residues 386 to 395 (SRHRRRHHKS) show a composition bias toward basic residues. Composition is skewed to basic and acidic residues over residues 396 to 408 (DRSSTHRRRESEK) and 417 to 439 (SESESSLHSEHNQKETAKSRRDS). Residues 529 to 570 (RKENQVISAEEKRTMLRLQAEEKAKKEREIVSQFKELVDTLQ) adopt a coiled-coil conformation.

Belongs to the NKAP family.

The protein is NKAP family protein UM04995 of Mycosarcoma maydis (Corn smut fungus).